The chain runs to 91 residues: Sec-independent protein translocase protein TatAt (91 aa).

Residues 9-29 (FPGLPGGPELLVVLLIVVLLF) form a helical membrane-spanning segment. Residues 48 to 91 (FQRGREEIEDELQDMTGDDDEDDATSESSADSVSTDSVSTESSN) form a disordered region. The segment covering 54–72 (EIEDELQDMTGDDDEDDAT) has biased composition (acidic residues). Residues 73-91 (SESSADSVSTDSVSTESSN) are compositionally biased toward low complexity.

This sequence belongs to the TatA/E family. As to quaternary structure, forms a complex with TatC. Cytoplasmic and membrane-bound TatA form high-molecular-weight complexes.

It is found in the cell membrane. It localises to the cytoplasm. Its function is as follows. Part of the twin-arginine translocation (Tat) system that transports large folded proteins containing a characteristic twin-arginine motif in their signal peptide across membranes. TatA could form the protein-conducting channel of the Tat system. The protein is Sec-independent protein translocase protein TatAt of Haloferax volcanii (strain ATCC 29605 / DSM 3757 / JCM 8879 / NBRC 14742 / NCIMB 2012 / VKM B-1768 / DS2) (Halobacterium volcanii).